Reading from the N-terminus, the 393-residue chain is Chalcone synthase DII (393 aa).

C164 is an active-site residue.

Belongs to the thiolase-like superfamily. Chalcone/stilbene synthases family.

The catalysed reaction is (E)-4-coumaroyl-CoA + 3 malonyl-CoA + 3 H(+) = 2',4,4',6'-tetrahydroxychalcone + 3 CO2 + 4 CoA. The protein operates within secondary metabolite biosynthesis; flavonoid biosynthesis. In terms of biological role, the primary product of this enzyme is 4,2',4',6'-tetrahydroxychalcone (also termed naringenin-chalcone or chalcone) which can under specific conditions spontaneously isomerize into naringenin. The sequence is that of Chalcone synthase DII (CHS-DII) from Ipomoea batatas (Sweet potato).